The primary structure comprises 316 residues: Glycine--tRNA ligase alpha subunit (316 aa).

The protein belongs to the class-II aminoacyl-tRNA synthetase family. Tetramer of two alpha and two beta subunits.

The protein localises to the cytoplasm. The catalysed reaction is tRNA(Gly) + glycine + ATP = glycyl-tRNA(Gly) + AMP + diphosphate. The chain is Glycine--tRNA ligase alpha subunit from Cupriavidus taiwanensis (strain DSM 17343 / BCRC 17206 / CCUG 44338 / CIP 107171 / LMG 19424 / R1) (Ralstonia taiwanensis (strain LMG 19424)).